A 563-amino-acid chain; its full sequence is Coiled-coil domain-containing protein 38 (563 aa).

3 coiled-coil regions span residues 129 to 212 (KRNT…KTEF), 384 to 415 (NIEF…RSRL), and 485 to 522 (ERMK…AVAQ). Residues 521 to 550 (AQPKKKLGRRLVYHSKPPSANKQQLPLVNE) form a disordered region. Residues 523–533 (PKKKLGRRLVY) are compositionally biased toward basic residues.

As to quaternary structure, interacts with CCDC42, CFAP53, IFT88 and ODF2. Interacts with CCDC146. Interacts with TEKT3. Interacts with ubiquitinated histone H2A.

The protein resides in the cytoplasm. It localises to the cytoskeleton. It is found in the microtubule organizing center. The protein localises to the centrosome. Its subcellular location is the perinuclear region. The protein resides in the cell projection. It localises to the cilium. It is found in the flagellum. In terms of biological role, essential for male fertility. Required for sperm flagellum biogenesis. Also required for acrosome biogenesis. Required for the attachment of developing acrosomes to the nucleus during spermiogenesis and may be involved in the transport of fibrous sheath components. This Macaca fascicularis (Crab-eating macaque) protein is Coiled-coil domain-containing protein 38 (CCDC38).